The following is an 827-amino-acid chain: Lon protease 2 (827 aa).

The tract at residues Met1–Gly22 is disordered. Residues Ser9–Pro21 are compositionally biased toward low complexity. Positions Leu33–Arg227 constitute a Lon N-terminal domain. Position 379–386 (Gly379–Thr386) interacts with ATP. Positions Thr615–Thr796 constitute a Lon proteolytic domain. Catalysis depends on residues Ser702 and Lys745. A disordered region spans residues Val799–Ala827.

This sequence belongs to the peptidase S16 family. Homohexamer. Organized in a ring with a central cavity.

The protein localises to the cytoplasm. It carries out the reaction Hydrolysis of proteins in presence of ATP.. ATP-dependent serine protease that mediates the selective degradation of mutant and abnormal proteins as well as certain short-lived regulatory proteins. Required for cellular homeostasis and for survival from DNA damage and developmental changes induced by stress. Degrades polypeptides processively to yield small peptide fragments that are 5 to 10 amino acids long. Binds to DNA in a double-stranded, site-specific manner. This chain is Lon protease 2, found in Myxococcus xanthus.